Consider the following 258-residue polypeptide: 1-(5-phosphoribosyl)-5-[(5-phosphoribosylamino)methylideneamino] imidazole-4-carboxamide isomerase 2 (258 aa).

The active-site Proton acceptor is Asp14. Asp140 (proton donor) is an active-site residue.

It belongs to the HisA/HisF family.

The protein resides in the cytoplasm. The catalysed reaction is 1-(5-phospho-beta-D-ribosyl)-5-[(5-phospho-beta-D-ribosylamino)methylideneamino]imidazole-4-carboxamide = 5-[(5-phospho-1-deoxy-D-ribulos-1-ylimino)methylamino]-1-(5-phospho-beta-D-ribosyl)imidazole-4-carboxamide. The protein operates within amino-acid biosynthesis; L-histidine biosynthesis; L-histidine from 5-phospho-alpha-D-ribose 1-diphosphate: step 4/9. The polypeptide is 1-(5-phosphoribosyl)-5-[(5-phosphoribosylamino)methylideneamino] imidazole-4-carboxamide isomerase 2 (hisA2) (Photorhabdus laumondii subsp. laumondii (strain DSM 15139 / CIP 105565 / TT01) (Photorhabdus luminescens subsp. laumondii)).